The following is a 344-amino-acid chain: DNA-directed RNA polymerase subunit alpha (344 aa).

An alpha N-terminal domain (alpha-NTD) region spans residues Met1–Pro238. Residues Asp253–Asp344 form an alpha C-terminal domain (alpha-CTD) region.

This sequence belongs to the RNA polymerase alpha chain family. As to quaternary structure, homodimer. The RNAP catalytic core consists of 2 alpha, 1 beta, 1 beta' and 1 omega subunit. When a sigma factor is associated with the core the holoenzyme is formed, which can initiate transcription.

The enzyme catalyses RNA(n) + a ribonucleoside 5'-triphosphate = RNA(n+1) + diphosphate. Functionally, DNA-dependent RNA polymerase catalyzes the transcription of DNA into RNA using the four ribonucleoside triphosphates as substrates. In Helicobacter acinonychis (strain Sheeba), this protein is DNA-directed RNA polymerase subunit alpha.